Consider the following 277-residue polypeptide: Glucose-6-phosphatase catalytic subunit 1 (277 aa).

Substrate is bound at residue Arg-4. Transmembrane regions (helical) follow at residues 39–59 (GHAM…LSIA) and 67–87 (LLYR…ELVV). Residue His-40 is the Proton donor of the active site. Arg-91 serves as a coordination point for substrate. Residue His-97 is the Nucleophile of the active site. The next 3 helical transmembrane spans lie at 131-151 (FLIT…LKAL), 215-235 (IGCI…TFSP), and 250-270 (AVAL…IYPV). Positions 274–277 (GKNL) match the Prevents secretion from ER motif.

Belongs to the glucose-6-phosphatase family.

It localises to the endoplasmic reticulum membrane. The enzyme catalyses D-glucose 6-phosphate + H2O = D-glucose + phosphate. It participates in carbohydrate biosynthesis; gluconeogenesis. In terms of biological role, hydrolyzes glucose-6-phosphate to glucose in the endoplasmic reticulum. Forms with the glucose-6-phosphate transporter (SLC37A4/G6PT) the complex responsible for glucose production in the terminal step of glycogenolysis and gluconeogenesis. Hence, it is the key enzyme in homeostatic regulation of blood glucose levels. In Haplochromis xenognathus (Lake Victoria cichlid), this protein is Glucose-6-phosphatase catalytic subunit 1 (g6pc1).